A 375-amino-acid polypeptide reads, in one-letter code: Aldehyde reductase FrzD (375 aa).

Residues Ala-61, Gln-103, and His-171 each contribute to the FMN site. The active-site Proton donor is Tyr-176. FMN-binding residues include Lys-223, Gly-294, and Arg-319.

Belongs to the NADH:flavin oxidoreductase/NADH oxidase family. FMN is required as a cofactor.

The enzyme catalyses (1S,4S)-4-[(4-hydroxyphenyl)methyl]-2,5-diazaspiro[bicyclo[3.2.1]octane-6,1'-cyclohexane]-2',5'-dien-4'-one + 2 NADPH + 2 H(+) = (1S,4S)-4-[(4-hydroxyphenyl)methyl]-2,5-diazaspiro[bicyclo[3.2.1]octane-6,1'-cyclohexan]-4'-one + 2 NADP(+). Its pathway is alkaloid biosynthesis; ergot alkaloid biosynthesis. In terms of biological role, aldehyde reductase; part of the gene cluster that mediates the biosynthesis of the alkaloid (-)-FR901483, a potent immunosuppressant that shows efficacy in animal models and a probable inhibitor of purine nucleotide biosynthesis by targeting phosphoribosylpyrophosphate amidotransferase (PPAT). Within the pathway, FrzD reduces the dienone portion of the pathway intermediates to cyclohexanone. The biosynthesis of (-)-FR901483 starts with the condensation of two L-tyrosines to yield (S,S)-dityrosyl-piperazine. This process occurs in 3 steps with the non-canonical nonribosomal peptide synthetase FrzA catalyzing the reduction of L-tyrosine into L-tyrosinal, the spontaneous condensation of 2 L-tyrosinal units, and the subsequent reduction by the NmrA-like family domain-containing oxidoreductase FrzB. The cytochrome P450 monooxygenase FrzC then performs coupling between N10 and C1' to morph the piperazine into a 1,4-diazabicyclo[3.2.1]octane spiro-fused to a 2,5-cyclohexadienone. The dienone portion is further reduced to cyclohexanone by the flavin-dependent reductase FrzD. The methyltranserases (MTs) FrzE and FrzF are then involved in the methylation at the C10' amine and the C4 phenolic oxygen, respectively. The order of the two MTs appear to be interchangeable. Cleavage of the C9-N10' bond by the dioxygenase FrzG then leads to formation of a conjugated iminium. In addition to the oxidation of C9, an additional dehydrogenation between C7 and C8 can occur to give a likely shunt product. The next biosynthetic step is the intramolecular aldol condensation catalyzed by the newly identified aldolase FrzH to yield an aza-tricyclic product with the formation of a C9-C3' bond. The short-chain dehydrogenase/reductase FrzI then produces dephospho-(-)-FR901483 that is phosphorylated at C4'-OH into (-)-FR901483 by the phosphotransferase FrzJ. The only unassigned enzyme in the cluster is the second cytochrome P450 monooxygenase FrzL. The protein is Aldehyde reductase FrzD of Cladobotryum sp.